The following is a 306-amino-acid chain: Prophage bactoprenol glucosyl transferase homolog (306 aa).

At 1 to 227 the chain is on the cytoplasmic side; that stretch reads MKISLVVPVF…ITSFSTFPLR (227 aa). Residues 228 to 248 form a helical membrane-spanning segment; that stretch reads IWTYIGLVVASVAFIYGAWMI. Residues 249-262 lie on the Periplasmic side of the membrane; sequence LDTIIFGNAVRGYP. Residues 263–283 form a helical membrane-spanning segment; it reads SLLVSILFLGGIQMIGIGVLG. Topologically, residues 284 to 306 are cytoplasmic; it reads EYIGRTYIETKKRPKYIIKRVKK.

Belongs to the glycosyltransferase 2 family. GtrB subfamily.

It localises to the cell inner membrane. Involved in O antigen modification. Catalyzes the transfer of the glucose residue from UDP-glucose to a lipid carrier. This Escherichia coli (strain K12) protein is Prophage bactoprenol glucosyl transferase homolog (yfdH).